The following is a 248-amino-acid chain: Transcription factor MYB1 (248 aa).

HTH myb-type domains lie at 9-61 (KEGM…LNYL) and 62-116 (RPGI…GRRV). DNA-binding regions (H-T-H motif) lie at residues 37 to 61 (WRSL…LNYL) and 89 to 112 (WSLI…NTNL). Residues 118 to 144 (DQSHQHCRPNPTITSTKPADAPPANAN) are disordered.

The protein localises to the nucleus. Transcription activator involved in the spatiotemporal regulation of flavonoid biosynthesis specifically in the corms of Montbretia. Activates the promoters of enzymes involved in the biosynthesis of the flavonol kaempferol and the flavonol-glycoside kaempferol-rhamnoside. The protein is Transcription factor MYB1 of Crocosmia x crocosmiiflora (Montbretia).